The primary structure comprises 201 residues: Small ribosomal subunit protein uS5 (201 aa).

The disordered stretch occupies residues 1–28; sequence MAGPQRRGSGAGGGERRDRKGRDGGAGA. Basic and acidic residues predominate over residues 14 to 23; the sequence is GERRDRKGRD. The region spanning 34–97 is the S5 DRBM domain; that stretch reads YVERVVAINR…EEAKKHFFKV (64 aa).

This sequence belongs to the universal ribosomal protein uS5 family. Part of the 30S ribosomal subunit. Contacts proteins S4 and S8.

With S4 and S12 plays an important role in translational accuracy. Its function is as follows. Located at the back of the 30S subunit body where it stabilizes the conformation of the head with respect to the body. This chain is Small ribosomal subunit protein uS5, found in Streptomyces coelicolor (strain ATCC BAA-471 / A3(2) / M145).